We begin with the raw amino-acid sequence, 258 residues long: GTP cyclohydrolase FolE2 (258 aa).

This sequence belongs to the GTP cyclohydrolase IV family.

The enzyme catalyses GTP + H2O = 7,8-dihydroneopterin 3'-triphosphate + formate + H(+). The protein operates within cofactor biosynthesis; 7,8-dihydroneopterin triphosphate biosynthesis; 7,8-dihydroneopterin triphosphate from GTP: step 1/1. Its function is as follows. Converts GTP to 7,8-dihydroneopterin triphosphate. The chain is GTP cyclohydrolase FolE2 from Pseudothermotoga lettingae (strain ATCC BAA-301 / DSM 14385 / NBRC 107922 / TMO) (Thermotoga lettingae).